The sequence spans 207 residues: Ribosome maturation factor RimP (207 aa).

The segment at 171-207 (RAPGGAPEEGEEDTTEAAPEGAGKSPKPGRRPARKTH) is disordered. Residues 197–207 (KPGRRPARKTH) are compositionally biased toward basic residues.

The protein belongs to the RimP family.

The protein resides in the cytoplasm. In terms of biological role, required for maturation of 30S ribosomal subunits. This chain is Ribosome maturation factor RimP, found in Gluconacetobacter diazotrophicus (strain ATCC 49037 / DSM 5601 / CCUG 37298 / CIP 103539 / LMG 7603 / PAl5).